We begin with the raw amino-acid sequence, 370 residues long: Cytochrome b (370 aa).

4 consecutive transmembrane segments (helical) span residues 30-50 (FGSMLGMVLVFQIVTGTFLAF), 74-96 (WIFRIFHFNGASLFFIFLYLHIF), 109-129 (VWMSGLTIYLLVMMEAFMGYV), and 175-195 (FFVLHFLLPWAILFIVLGHLI). His80 and His94 together coordinate heme b. Heme b contacts are provided by His179 and His193. His198 is a binding site for a ubiquinone. A run of 4 helical transmembrane segments spans residues 221 to 240 (YIGKDAYNIVVWLVFIVLSL), 284 to 304 (VLGVIALLMSIVTFYFFALVN), 316 to 336 (FLVFLFIISSVILSWLGQCMV), and 342 to 362 (VLSPLFSVIYFGLAYLLLGIF).

It belongs to the cytochrome b family. The main subunits of complex b-c1 are: cytochrome b, cytochrome c1 and the Rieske protein. It depends on heme b as a cofactor.

The protein localises to the mitochondrion inner membrane. In terms of biological role, component of the ubiquinol-cytochrome c reductase complex (complex III or cytochrome b-c1 complex) that is part of the mitochondrial respiratory chain. The b-c1 complex mediates electron transfer from ubiquinol to cytochrome c. Contributes to the generation of a proton gradient across the mitochondrial membrane that is then used for ATP synthesis. This Caenorhabditis briggsae protein is Cytochrome b (ctb-1).